Reading from the N-terminus, the 600-residue chain is MCGIVGYIGQLDAKEILLKGLEKLEYRGYDSAGIAVANEQGIHVFKEKGRIADLREVVDANIEAKAGIGHTRWATHGEPSYLNAHPHQSALGRFTLVHNGVIENYVQLKQEYLQDVELKSDTDTEVVVQVIEQFVNGGLDTEEAFRKTLTLLKGSYAIALFDNENRETIFVAKNKSPLLVGLGDTFNVVASDAMAMLQVTNEYVELMDKEMVIVTDDQVVIKNLDGDVISRASYIAELDASDIEKGTYPHYMLKETDEQPVVMRKIIQTYQDENGKLSVPGDIAAAVAEADRIYIIGCGTSYHAGLVGKQYIEMWANVPVEVHVASEFSYNMPLLSKKPLFIFLSQSGETADSRAVLVQVKALGHKALTITNVPGSTLSREADYTLLLHAGPEIAVASTKAYTAQIAVLAVLASVAADKNGIDIGFDLVKELGIAANAMEALCDQKDEMEMIAREYLTVSRNAFFIGRGLDYFVCVEGALKLKEISYIQAEGFAGGELKHGTIALIEQGTPVFALATQEHVNLSIRGNVKEVAARGANTCIISLKGLDDADDRFVLPEVNPALAPLVSVVPLQLIAYYAALHRGCDVDKPRNLAKSVTVE.

C2 serves as the catalytic Nucleophile; for GATase activity. The Glutamine amidotransferase type-2 domain maps to 2–217; that stretch reads CGIVGYIGQL…DKEMVIVTDD (216 aa). 2 SIS domains span residues 283-422 and 452-590; these read IAAA…KNGI and IARE…VDKP. Residue K595 is the For Fru-6P isomerization activity of the active site.

As to quaternary structure, homodimer.

The protein resides in the cytoplasm. It catalyses the reaction D-fructose 6-phosphate + L-glutamine = D-glucosamine 6-phosphate + L-glutamate. In terms of biological role, catalyzes the first step in hexosamine metabolism, converting fructose-6P into glucosamine-6P using glutamine as a nitrogen source. This Bacillus spizizenii (strain ATCC 23059 / NRRL B-14472 / W23) (Bacillus subtilis subsp. spizizenii) protein is Glutamine--fructose-6-phosphate aminotransferase [isomerizing] (glmS).